A 129-amino-acid chain; its full sequence is Methylmalonyl-CoA decarboxylase subunit gamma (129 aa).

Composition is skewed to low complexity over residues 24-39 (APAAAPKAAPAAAPAP) and 49-58 (PAAAAAPVPA). Residues 24–58 (APAAAPKAAPAAAPAPKAAPAPAPAPAAAAAPVPA) are disordered. Residues 51–129 (AAAAPVPAGA…STGDDMVVLG (79 aa)) enclose the Biotinyl-binding domain. At Lys-95 the chain carries N6-biotinyllysine.

As to quaternary structure, the methylmalonyl-CoA decarboxylase is composed of five subunits: the carboxyltransferase alpha subunit (MmdA), the tunnel beta subunit (MmdB), the biotin-containing gamma subunit (MmdC), and the delta (MmdD) and epsilon (MmdE) subunits. The cofactor is biotin.

It localises to the cell membrane. It carries out the reaction (S)-methylmalonyl-CoA + Na(+)(in) + H(+)(out) = propanoyl-CoA + Na(+)(out) + CO2. Its activity is regulated as follows. Completely inhibited by avidin. Biotin-containing subunit of the sodium ion pump methylmalonyl-CoA decarboxylase, which converts the chemical energy of a decarboxylation reaction into an electrochemical gradient of Na(+) ions across the cytoplasmic membrane, thereby creating a sodium ion motive force that is used for ATP synthesis. Can also convert malonyl-CoA into acetyl-CoA. The polypeptide is Methylmalonyl-CoA decarboxylase subunit gamma (Veillonella parvula (Staphylococcus parvulus)).